Here is a 782-residue protein sequence, read N- to C-terminus: E3 ubiquitin-protein ligase SopA (782 aa).

Residues 137–171 (VSVSANNRPTVSEGRTPPVSPSLSLQATSSPSSPA) are disordered. Positions 157-171 (PSLSLQATSSPSSPA) are enriched in low complexity. Cys753 functions as the Glycyl thioester intermediate in the catalytic mechanism.

Belongs to the SopA E3 ligase family. Ubiquitinated in the presence of host E1 ubiquitin-activating enzyme, E2 ubiquitin-conjugating enzyme and ubiquitin.

It localises to the secreted. The protein resides in the host cell. It catalyses the reaction S-ubiquitinyl-[E2 ubiquitin-conjugating enzyme]-L-cysteine + [acceptor protein]-L-lysine = [E2 ubiquitin-conjugating enzyme]-L-cysteine + N(6)-ubiquitinyl-[acceptor protein]-L-lysine.. Functionally, effector proteins function to alter host cell physiology and promote bacterial survival in host tissues. This protein is an E3 ubiquitin ligase that interferes with host's ubiquitination pathway. This Salmonella dublin (strain CT_02021853) protein is E3 ubiquitin-protein ligase SopA (sopA).